A 513-amino-acid chain; its full sequence is Tyrosine-protein phosphatase non-receptor type substrate 1 (513 aa).

The first 31 residues, 1–31 (MEPAGPAPGRLGPLLLCLLLSASCFCTGATG), serve as a signal peptide directing secretion. The Ig-like V-type domain occupies 32 to 137 (KELKVTQPEK…SSEPDTEIQS (106 aa)). At 32–373 (KELKVTQPEK…PDNNATHNWN (342 aa)) the chain is on the extracellular side. N-linked (GlcNAc...) asparagine glycans are attached at residues N54, N92, N168, N180, N205, N209, N246, N271, N293, N302, N312, N320, N345, and N367. C55 and C121 are oxidised to a cystine. Ig-like C1-type domains lie at 149–248 (PSPP…ANLS) and 255–343 (PTVK…PAIT). A disulfide bridge connects residues C171 and C229. A disulfide bridge connects residues C274 and C332. The chain crosses the membrane as a helical span at residues 374–394 (VFIGVGVACALLVVLLMAALY). At 395 to 511 (LLRIKQKKAK…FSEYASVQVQ (117 aa)) the chain is on the cytoplasmic side. A Phosphotyrosine; by Tyr-kinases modification is found at Y440. Positions 440-443 (YADL) match the SH2-binding motif. The segment at 444-513 (NLPKEKKPAP…EYASVQVQRK (70 aa)) is disordered. The SH3-binding signature appears at 450 to 455 (KPAPRA). 3 positions are modified to phosphotyrosine; by Tyr-kinases: Y464, Y481, and Y505. 3 short sequence motifs (SH2-binding) span residues 464–467 (YASI), 481–484 (YADL), and 505–508 (YASV). The segment covering 504–513 (EYASVQVQRK) has biased composition (polar residues).

In terms of assembly, binds PTPN11 when tyrosine-phosphorylated, except in macrophages, where it primarily binds PTPN6. Binds GRB2 vitro. Binds FGR. Binds JAK2 irrespective of its phosphorylation status and forms a stable complex. Binds SCAP1 and/or SCAP2. The resulting complex recruits FYB1. Binds PTK2B. Interacts with TRIM2. Post-translationally, N-glycosylated. In terms of processing, phosphorylated on tyrosine residues. Highly expressed in cerebral cortex, brain, spinal cord, cerebellum and spleen, and at much lower levels in kidney, thymus, heart, lung and liver. Within the cerebellum, highly expressed throughout the molecular layer, and in synaptic glomeruli in the granule cell layer. Detected in neurons of the hippocampus and dentate gyrus, and in olfactory bulb. Not detected in Purkinje cells. Highly expressed in the plexiform layers, optic fiber layer and the outer segments of the photoreceptor layer in the retina. Highly expressed in macrophages. Isoform 3 is detected at very low levels in all tissues tested.

Its subcellular location is the membrane. Immunoglobulin-like cell surface receptor for CD47. Acts as a docking protein and induces translocation of PTPN6, PTPN11 and other binding partners from the cytosol to the plasma membrane. Supports adhesion of cerebellar neurons, neurite outgrowth and glial cell attachment. May play a key role in intracellular signaling during synaptogenesis and in synaptic function. Involved in the negative regulation of receptor tyrosine kinase-coupled cellular responses induced by cell adhesion, growth factors or insulin. Mediates negative regulation of phagocytosis, mast cell activation and dendritic cell activation. CD47 binding prevents maturation of immature dendritic cells and inhibits cytokine production by mature dendritic cells. Plays a role in antiviral immunity and limits new world arenavirus infection by decreasing virus internalization. Receptor for THBS1. Interaction with THBS1 stimulates phosphorylation of SIRPA. In response to THBS1, involved in ROS signaling in non-phagocytic cells, stimulating NADPH oxidase-derived ROS production. This chain is Tyrosine-protein phosphatase non-receptor type substrate 1 (Sirpa), found in Mus musculus (Mouse).